The primary structure comprises 222 residues: 25 kDa elongation factor 1-beta (222 aa).

The span at 75–94 (TSASAPAKQAPKKAASAPAK) shows a compositional bias: low complexity. Positions 75–98 (TSASAPAKQAPKKAASAPAKQADE) are disordered.

Belongs to the EF-1-beta/EF-1-delta family. In terms of assembly, EF-1 is composed of 4 subunits: alpha, beta, delta, and gamma.

EF-1-beta and EF-1-delta stimulate the exchange of GDP bound to EF-1-alpha to GTP. This Trypanosoma cruzi protein is 25 kDa elongation factor 1-beta.